A 739-amino-acid chain; its full sequence is Homeobox protein SIX5 (739 aa).

Low complexity-rich tracts occupy residues 1–24, 34–61, and 74–83; these read MATL…AAAA, QLLQ…AAGA, and PEAASEPPTG. 4 disordered regions span residues 1–84, 251–294, 361–381, and 617–650; these read MATL…PTGL, NRRQ…AAPV, LTGG…SETK, and LSAQ…FPAP. The homeobox DNA-binding region spans 201 to 260; the sequence is GEETVYCFKERSRAALKACYRGNRYPTPDEKRRLATLTGLSLTQVSNWFKNRRQRDRTGA. Basic and acidic residues predominate over residues 279 to 289; sequence ESSRSPEDLER. A compositionally biased stretch (low complexity) spans 617–646; the sequence is LSAQQPPPAAATTSSTSLPFSPDSPGLLPN.

This sequence belongs to the SIX/Sine oculis homeobox family. Probably binds DNA dimer. Interacts with EYA3, and probably EYA1 and EYA2. In terms of tissue distribution, expressed in adult but not in fetal eyes. Found in corneal epithelium and endothelium, lens epithelium, ciliary body epithelia, cellular layers of the retina and the sclera.

It is found in the cytoplasm. The protein localises to the nucleus. In terms of biological role, transcription factor that is thought to be involved in regulation of organogenesis. May be involved in determination and maintenance of retina formation. Binds a 5'-GGTGTCAG-3' motif present in the ARE regulatory element of ATP1A1. Binds a 5'-TCA[AG][AG]TTNC-3' motif present in the MEF3 element in the myogenin promoter, and in the IGFBP5 promoter. Thought to be regulated by association with Dach and Eya proteins, and seems to be coactivated by EYA1, EYA2 and EYA3. The chain is Homeobox protein SIX5 (SIX5) from Homo sapiens (Human).